We begin with the raw amino-acid sequence, 427 residues long: MSLIEEIVARQIFDSRGNPTIEVDVITENGLIGRAAVPSGASTGKHEAVELRDNDKSIYMGKSVLKAVANVNDIIAPELIGSHVFEQNLIDRLMIDLDGTANKGKLGANAILGVSLALAKAAAQEAGLPLYRYVGGVSANTLPVPMMNIINGGSHADNSIDFQEFMIMPTGAKSFTEAMRMGSEIFHNLAKVLKSKGMSTNVGDEGGFAPNIASNEDALITVIQAIEAAGYRPGEDVMIAFDAASSEFYDSETKLYHFKKSTGDKLTSSQMASYWADLVKRYPIVSIEDGMDEDDWSGWAELTKLVGDKVQLVGDDLFVTNVSRLQQGIDQGIANSILVKVNQIGSLTETISAVNLAKRNSYTSVMSHRSGETEDNTIADLAVALNCGQIKTGSCSRSDRMAKYNQLLRIEEELGEAAYFPGKNMRK.

Glutamine 163 provides a ligand contact to (2R)-2-phosphoglycerate. The Proton donor role is filled by glutamate 205. Mg(2+) contacts are provided by aspartate 242, glutamate 288, and aspartate 315. Residues lysine 340, arginine 369, serine 370, and lysine 391 each coordinate (2R)-2-phosphoglycerate. Lysine 340 (proton acceptor) is an active-site residue.

This sequence belongs to the enolase family. It depends on Mg(2+) as a cofactor.

The protein resides in the cytoplasm. The protein localises to the secreted. Its subcellular location is the cell surface. The catalysed reaction is (2R)-2-phosphoglycerate = phosphoenolpyruvate + H2O. It participates in carbohydrate degradation; glycolysis; pyruvate from D-glyceraldehyde 3-phosphate: step 4/5. Catalyzes the reversible conversion of 2-phosphoglycerate (2-PG) into phosphoenolpyruvate (PEP). It is essential for the degradation of carbohydrates via glycolysis. The polypeptide is Enolase (Cytophaga hutchinsonii (strain ATCC 33406 / DSM 1761 / CIP 103989 / NBRC 15051 / NCIMB 9469 / D465)).